Reading from the N-terminus, the 407-residue chain is Argininosuccinate synthase (407 aa).

Residues 16 to 24 (AYSGGLDTS) and alanine 44 each bind ATP. Residues tyrosine 96 and serine 101 each contribute to the L-citrulline site. Glycine 126 serves as a coordination point for ATP. The L-aspartate site is built by threonine 128, asparagine 132, and aspartate 133. Residue asparagine 132 participates in L-citrulline binding. L-citrulline contacts are provided by arginine 136, serine 185, serine 194, glutamate 270, and tyrosine 282.

The protein belongs to the argininosuccinate synthase family. Type 1 subfamily. As to quaternary structure, homotetramer.

It is found in the cytoplasm. It catalyses the reaction L-citrulline + L-aspartate + ATP = 2-(N(omega)-L-arginino)succinate + AMP + diphosphate + H(+). It participates in amino-acid biosynthesis; L-arginine biosynthesis; L-arginine from L-ornithine and carbamoyl phosphate: step 2/3. This is Argininosuccinate synthase from Shewanella sp. (strain W3-18-1).